We begin with the raw amino-acid sequence, 337 residues long: DNA-directed RNA polymerase subunit alpha (337 aa).

The tract at residues 1 to 233 is alpha N-terminal domain (alpha-NTD); that stretch reads MIQKNWQELI…DQLAIFVNFE (233 aa). Positions 249–337 are alpha C-terminal domain (alpha-CTD); it reads FNPALLKKVD…DLAKRYEDQY (89 aa).

The protein belongs to the RNA polymerase alpha chain family. As to quaternary structure, homodimer. The RNAP catalytic core consists of 2 alpha, 1 beta, 1 beta' and 1 omega subunit. When a sigma factor is associated with the core the holoenzyme is formed, which can initiate transcription.

The catalysed reaction is RNA(n) + a ribonucleoside 5'-triphosphate = RNA(n+1) + diphosphate. Functionally, DNA-dependent RNA polymerase catalyzes the transcription of DNA into RNA using the four ribonucleoside triphosphates as substrates. In Brucella anthropi (strain ATCC 49188 / DSM 6882 / CCUG 24695 / JCM 21032 / LMG 3331 / NBRC 15819 / NCTC 12168 / Alc 37) (Ochrobactrum anthropi), this protein is DNA-directed RNA polymerase subunit alpha.